Reading from the N-terminus, the 248-residue chain is Probable transcriptional regulatory protein BARBAKC583_0163 (248 aa).

The protein belongs to the TACO1 family.

The protein localises to the cytoplasm. The chain is Probable transcriptional regulatory protein BARBAKC583_0163 from Bartonella bacilliformis (strain ATCC 35685 / KC583 / Herrer 020/F12,63).